We begin with the raw amino-acid sequence, 1155 residues long: ATP-dependent helicase/deoxyribonuclease subunit B (1155 aa).

Residues 1–278 (MSQLNAYIGR…FTKQERFENR (278 aa)) enclose the UvrD-like helicase ATP-binding domain. 9–16 (GRAGTGKS) lines the ATP pocket. Positions 270-584 (TKQERFENRD…SIGSMDLAKV (315 aa)) constitute a UvrD-like helicase C-terminal domain. Cys785, Cys1112, Cys1115, and Cys1121 together coordinate [4Fe-4S] cluster.

The protein belongs to the helicase family. AddB/RexB type 1 subfamily. Heterodimer of AddA and AddB. Requires Mg(2+) as cofactor. [4Fe-4S] cluster serves as cofactor.

Functionally, the heterodimer acts as both an ATP-dependent DNA helicase and an ATP-dependent, dual-direction single-stranded exonuclease. Recognizes the chi site generating a DNA molecule suitable for the initiation of homologous recombination. The AddB subunit has 5' -&gt; 3' nuclease activity but not helicase activity. This chain is ATP-dependent helicase/deoxyribonuclease subunit B, found in Staphylococcus carnosus (strain TM300).